Reading from the N-terminus, the 1025-residue chain is Interferon-induced helicase C domain-containing protein 1 (1025 aa).

2 CARD domains span residues 7–97 (AEDS…YVKP) and 110–190 (AHDE…QTGN). Glycyl lysine isopeptide (Lys-Gly) (interchain with G-Cter in ISG15) cross-links involve residues Lys-23 and Lys-43. The disordered stretch occupies residues 273 to 297 (SLGHNSNMGRDSGTMGSDSDESVIQ). Over residues 275–297 (GHNSNMGRDSGTMGSDSDESVIQ) the composition is skewed to polar residues. Phosphoserine occurs at positions 289, 291, and 302. The 194-residue stretch at 317–510 (AQPALDGKNI…SEAEKHILNI (194 aa)) folds into the Helicase ATP-binding domain. Phosphoserine occurs at positions 645 and 648. Residues 700–872 (KLIKLRNTIL…NMKPEEYAHK (173 aa)) form the Helicase C-terminal domain. Ser-828 carries the post-translational modification Phosphoserine; by RIOK3. In terms of domain architecture, RLR CTR spans 893 to 1020 (AKQYNDNPSL…PDLDYSEYCL (128 aa)). Zn(2+) is bound by residues Cys-907, Cys-910, Cys-962, and Cys-964.

The protein belongs to the helicase family. RLR subfamily. As to quaternary structure, monomer in the absence of ligands and homodimerizes in the presence of dsRNA ligands. Can assemble into helical or linear polymeric filaments on long dsRNA. Interacts with MAVS/IPS1. Interacts (via the CARD domains) with TKFC, the interaction is inhibited by viral infection. Interacts with PCBP2. Interacts with NLRC5. Interacts with PIAS2-beta. Interacts with DDX60. Interacts with ANKRD17. Interacts with IKBKE. Interacts with ATG5 and ATG12, either as ATG5 and ATG12 monomers or as ATG12-ATG5 conjugates. Interacts with ZCCHC3; leading to activate IFIH1/MDA5. Interacts with RNF123. Interacts with DDX3X. Interacts with NOD1; this interaction promotes transcription of antiviral genes and inhibition of viral replication. Interacts with ECSIT; this interaction bridges IFIH1 to the MAVS complex at the mitochondrion. Post-translationally, during apoptosis, processed into 3 cleavage products. The helicase-containing fragment, once liberated from the CARD domains, translocate from the cytoplasm to the nucleus. The processed protein significantly sensitizes cells to DNA degradation. In terms of processing, sumoylated. Sumoylation positively regulates its role in type I interferon induction and is enhanced by PIAS2-beta. Ubiquitinated by RNF125, leading to its degradation by the proteasome. USP17/UPS17L2-dependent deubiquitination positively regulates the receptor. Ubiquitinated by TRIM25 via 'Lys-63'-linked ubiquitination, promoting activation of IFIH1/MDA5. Ubiquitinated by TRIM40 via 'Lys-48'-linked ubiquitination; leading to proteasomal degradation. Ubiquitinated by TRIM65 via 'Lys-63'-linked ubiquitination, promoting activation of IFIH1/MDA5. Post-translationally, ISGylated by ISG15. ISGylation increases upon infection with viruses. ISGylation at Lys-23 and Lys-43 is dependent of dephosphorylation, regulates mitochondrial translocation and oligomerization. Essential for IFIH1/MDA5-mediated cytokine responses and restriction of virus replication. In terms of processing, phosphorylated. Dephosphorylated by phsophatases PP1; dephosphorylation precedes and is required for ISGylation. As to expression, expression is prominent in lung, liver, kidney, heart and spleen (at protein level). Widely expressed at low level.

The protein resides in the cytoplasm. It localises to the nucleus. The protein localises to the mitochondrion. The catalysed reaction is ATP + H2O = ADP + phosphate + H(+). Its function is as follows. Innate immune receptor which acts as a cytoplasmic sensor of viral nucleic acids and plays a major role in sensing viral infection and in the activation of a cascade of antiviral responses including the induction of type I interferons and pro-inflammatory cytokines. Its ligands include mRNA lacking 2'-O-methylation at their 5' cap and long-dsRNA (&gt;1 kb in length). Upon ligand binding it associates with mitochondria antiviral signaling protein (MAVS/IPS1) which activates the IKK-related kinases: TBK1 and IKBKE which phosphorylate interferon regulatory factors: IRF3 and IRF7 which in turn activate transcription of antiviral immunological genes, including interferons (IFNs); IFN-alpha and IFN-beta. Responsible for detecting the Picornaviridae family members such as encephalomyocarditis virus (EMCV), mengo encephalomyocarditis virus (ENMG), and theiler's murine encephalomyelitis virus (TMEV). Can also detect other viruses such as dengue virus (DENV), west Nile virus (WNV), and reovirus. Also involved in antiviral signaling in response to viruses containing a dsDNA genome, such as vaccinia virus. Plays an important role in amplifying innate immune signaling through recognition of RNA metabolites that are produced during virus infection by ribonuclease L (RNase L). May play an important role in enhancing natural killer cell function and may be involved in growth inhibition and apoptosis in several tumor cell lines. This is Interferon-induced helicase C domain-containing protein 1 from Mus musculus (Mouse).